A 308-amino-acid polypeptide reads, in one-letter code: Glutaminase (308 aa).

Substrate-binding residues include Ser-66, Asn-117, Glu-161, Asn-168, Tyr-192, Tyr-244, and Val-262.

It belongs to the glutaminase family. Homotetramer.

It carries out the reaction L-glutamine + H2O = L-glutamate + NH4(+). The polypeptide is Glutaminase (Salmonella heidelberg (strain SL476)).